The sequence spans 814 residues: Rho GTPase-activating protein 44 (814 aa).

Positions 14 to 249 (QTVGRAEKTE…IKAQQEAWVE (236 aa)) constitute a BAR domain. The Rho-GAP domain occupies 255 to 445 (KPLEEHLMIS…PIIQHADWFF (191 aa)). Disordered stretches follow at residues 467 to 493 (ANYS…RPLS), 528 to 769 (RGSS…MSTD), and 784 to 814 (STLR…STAL). Basic and acidic residues predominate over residues 479 to 489 (PADRRQPEQAR). At Ser-493 the chain carries Phosphoserine. Composition is skewed to low complexity over residues 567–581 (SPAT…SGAS), 598–612 (SPGS…SIQG), 622–637 (PQPA…DQSP), 684–704 (SPYG…LSPA), and 741–752 (SVSLSASSPQST). The segment at 727–814 (KPRQRPTLPP…SEEESESTAL (88 aa)) is interaction with BST2. The segment covering 790-805 (PLEHARRHSATDKRDS) has biased composition (basic and acidic residues). At Ser-805 the chain carries Phosphoserine. A PDZ-binding motif is present at residues 811–814 (STAL).

Interacts with BST2 (via cytoplasmic domain). Interacts (probably via PDZ-binding motif) with SHANK3 (via PDZ domain); the interaction takes place in dendritic spines and promotes GRIA1 exocytosis. As to expression, specifically expressed in brain (at protein level). Detected in olfactory bulb, cortex, hippocampus, diencephalon and cerebellum (at protein level). Expressed in hippocampal neurons (at protein level).

It localises to the cell projection. It is found in the dendritic spine. The protein resides in the recycling endosome. The protein localises to the presynapse. Its subcellular location is the dendrite. GTPase-activating protein (GAP) that stimulates the GTPase activity of Rho-type GTPases. Thereby, controls Rho-type GTPases cycling between their active GTP-bound and inactive GDP-bound states. Acts as a GAP at least for CDC42 and RAC1. In neurons, is involved in dendritic spine formation and synaptic plasticity in a specific RAC1-GAP activity. Limits the initiation of exploratory dendritic filopodia. Recruited to actin-patches that seed filopodia, binds specifically to plasma membrane sections that are deformed inward by acto-myosin mediated contractile forces. Acts through GAP activity on RAC1 to reduce actin polymerization necessary for filopodia formation. In association with SHANK3, promotes GRIA1 exocytosis from recycling endosomes and spine morphological changes associated to long-term potentiation. The chain is Rho GTPase-activating protein 44 from Mus musculus (Mouse).